The chain runs to 566 residues: Cyclin G (566 aa).

The Cyclin N-terminal domain maps to 285-368 (MWYELPSDVL…VIANKLGVQM (84 aa)).

This sequence belongs to the cyclin family. Cyclin G subfamily. Interacts with corto. Interacts with the cyclin-dependent kinases Cdk2 and Cdk4. Interacts with Brca2 and Rad9. Interacts with polycomb protein Asx. Interacts with protein phosphatase 2A subunit wdb.

It localises to the chromosome. Functionally, cyclin with roles in multiple processes including transcription, meiotic recombination repair, cell cycle regulation, and promotion of normal growth and metabolism. Binds to the promoter region of the homeobox gene Abd-B and is involved in maintaining Abd-B expression in the pupal epithelium. Involved in the transcriptional repression of the homeotic genes Scr and Ubx. Plays a role in meiotic recombination repair of DNA double-strand breaks which ensures efficient translation of grk and promotes grk activity in the oocyte, leading to oocyte dorso-ventral axis formation following secretion of grk from the oocyte and its binding to Egfr in the directly overlying follicle cells. Negatively regulates the binding of serine/threonine-protein kinase Akt1 to the protein phosphatase 2A subunit wdb, promoting normal growth and metabolism. Required for the formation of bilateral symmetry. Negatively regulates cell cycle progression by preventing G1 to S transition and retarding S-phase progression. The chain is Cyclin G from Drosophila melanogaster (Fruit fly).